We begin with the raw amino-acid sequence, 166 residues long: Small ribosomal subunit protein uS9 (166 aa).

Residues 1 to 16 (MSDTTNEVEETYEVDE) are compositionally biased toward acidic residues. The tract at residues 1-45 (MSDTTNEVEETYEVDEQGIAYSSESAPSADAPLRPATIAPANATG) is disordered.

Belongs to the universal ribosomal protein uS9 family.

The protein is Small ribosomal subunit protein uS9 of Nocardioides sp. (strain ATCC BAA-499 / JS614).